Reading from the N-terminus, the 480-residue chain is Chromosomal replication initiator protein DnaA (480 aa).

The domain I, interacts with DnaA modulators stretch occupies residues 1 to 71; it reads MRHDALFERV…TTLVQQEDSE (71 aa). The segment at 71 to 137 is domain II; the sequence is EILKVEILVR…RPVQAPLFGS (67 aa). The tract at residues 138–360 is domain III, AAA+ region; the sequence is PLDQRYGFDS…GAFNQLLFRR (223 aa). ATP is bound by residues glycine 184, glycine 186, lysine 187, and threonine 188. The tract at residues 361–480 is domain IV, binds dsDNA; that stretch reads SFEPQLSIER…IELLKRLINE (120 aa).

Belongs to the DnaA family. In terms of assembly, oligomerizes as a right-handed, spiral filament on DNA at oriC.

Its subcellular location is the cytoplasm. Functionally, plays an essential role in the initiation and regulation of chromosomal replication. ATP-DnaA binds to the origin of replication (oriC) to initiate formation of the DNA replication initiation complex once per cell cycle. Binds the DnaA box (a 9 base pair repeat at the origin) and separates the double-stranded (ds)DNA. Forms a right-handed helical filament on oriC DNA; dsDNA binds to the exterior of the filament while single-stranded (ss)DNA is stabiized in the filament's interior. The ATP-DnaA-oriC complex binds and stabilizes one strand of the AT-rich DNA unwinding element (DUE), permitting loading of DNA polymerase. After initiation quickly degrades to an ADP-DnaA complex that is not apt for DNA replication. Binds acidic phospholipids. The chain is Chromosomal replication initiator protein DnaA from Rhizobium meliloti (strain 1021) (Ensifer meliloti).